The primary structure comprises 569 residues: 3-(3-hydroxy-phenyl)propionate/3-hydroxycinnamic acid hydroxylase (569 aa).

FAD is bound by residues 12 to 41 (DVVVVGAGPSGLTLANILGLQGVATLVVDE) and 277 to 287 (FRKGRLMLAGD).

It belongs to the PheA/TfdB FAD monooxygenase family. Requires FAD as cofactor.

The enzyme catalyses 3-(3-hydroxyphenyl)propanoate + NADH + O2 + H(+) = 3-(2,3-dihydroxyphenyl)propanoate + NAD(+) + H2O. It catalyses the reaction (2E)-3-(3-hydroxyphenyl)prop-2-enoate + NADH + O2 + H(+) = (2E)-3-(2,3-dihydroxyphenyl)prop-2-enoate + NAD(+) + H2O. The protein operates within aromatic compound metabolism; 3-phenylpropanoate degradation. Catalyzes the insertion of one atom of molecular oxygen into position 2 of the phenyl ring of 3-(3-hydroxyphenyl)propionate (3-HPP) and hydroxycinnamic acid (3HCI). This is 3-(3-hydroxy-phenyl)propionate/3-hydroxycinnamic acid hydroxylase from Mycolicibacterium vanbaalenii (strain DSM 7251 / JCM 13017 / BCRC 16820 / KCTC 9966 / NRRL B-24157 / PYR-1) (Mycobacterium vanbaalenii).